Consider the following 227-residue polypeptide: tRNA (guanine-N(1)-)-methyltransferase (227 aa).

S-adenosyl-L-methionine-binding positions include Gly110 and 129 to 134 (IGDYVL).

Belongs to the RNA methyltransferase TrmD family. As to quaternary structure, homodimer.

The protein resides in the cytoplasm. It carries out the reaction guanosine(37) in tRNA + S-adenosyl-L-methionine = N(1)-methylguanosine(37) in tRNA + S-adenosyl-L-homocysteine + H(+). Specifically methylates guanosine-37 in various tRNAs. This Mycoplasmopsis agalactiae (strain NCTC 10123 / CIP 59.7 / PG2) (Mycoplasma agalactiae) protein is tRNA (guanine-N(1)-)-methyltransferase.